A 344-amino-acid polypeptide reads, in one-letter code: Adenosine kinase (344 aa).

Asp298 is a catalytic residue.

Belongs to the carbohydrate kinase PfkB family. Mg(2+) serves as cofactor.

It carries out the reaction adenosine + ATP = AMP + ADP + H(+). The protein operates within purine metabolism; AMP biosynthesis via salvage pathway; AMP from adenosine: step 1/1. This is Adenosine kinase (ADK) from Schizophyllum commune (Split gill fungus).